A 138-amino-acid chain; its full sequence is Small ribosomal subunit protein uS11c (138 aa).

A disordered region spans residues 1 to 23 (MAKPIPRIGSRRNGRIGSRKSAR). Positions 9–23 (GSRRNGRIGSRKSAR) are enriched in basic residues.

Belongs to the universal ribosomal protein uS11 family. Part of the 30S ribosomal subunit.

Its subcellular location is the plastid. It localises to the chloroplast. In Vitis vinifera (Grape), this protein is Small ribosomal subunit protein uS11c.